A 247-amino-acid polypeptide reads, in one-letter code: tRNA pseudouridine synthase A 1 (247 aa).

Asp-53 (nucleophile) is an active-site residue. Position 111 (Tyr-111) interacts with substrate.

The protein belongs to the tRNA pseudouridine synthase TruA family. In terms of assembly, homodimer.

The enzyme catalyses uridine(38/39/40) in tRNA = pseudouridine(38/39/40) in tRNA. In terms of biological role, formation of pseudouridine at positions 38, 39 and 40 in the anticodon stem and loop of transfer RNAs. In Bacillus cereus (strain ATCC 10987 / NRS 248), this protein is tRNA pseudouridine synthase A 1.